The chain runs to 1710 residues: Chromodomain-helicase-DNA-binding protein 1 (1710 aa).

Basic and acidic residues predominate over residues 1–10 (MNGHSDEESV). The interval 1–252 (MNGHSDEESV…KEDEEMKTDS (252 aa)) is disordered. Residues 35–63 (SSGSSSDGSSSQSGSSDSDSGSESGSQSE) show a composition bias toward low complexity. Residues 67–85 (DTSRENKVQAKPPKVDGAE) are compositionally biased toward basic and acidic residues. Residues 105–121 (QQQQQQQQQHQASSNSG) are compositionally biased toward low complexity. Acidic residues predominate over residues 122 to 136 (SEEDSSSSEDSDDSS). Residues 152–163 (SGSGSPSQSGSD) show a composition bias toward low complexity. The segment covering 187-210 (KVKSRKPQNRSKSKNGKKILGQKK) has biased composition (basic residues). A phosphoserine mark is found at serine 215 and serine 216. Residues 215–226 (SSEEDDDEEDYD) are compositionally biased toward acidic residues. Threonine 237 carries the post-translational modification Phosphothreonine. Serine 241 carries the phosphoserine modification. Position 250 is a phosphothreonine (threonine 250). The residue at position 252 (serine 252) is a Phosphoserine. Chromo domains are found at residues 272 to 364 (ETIE…RWLK) and 389 to 452 (QIVE…TPFK). Serine 471 is modified (phosphoserine). The Helicase ATP-binding domain occupies 493-663 (AHSWCKGNSC…WSLLHFIMPE (171 aa)). 506 to 513 (DEMGLGKT) serves as a coordination point for ATP. A DEAH box motif is present at residues 614 to 617 (DEAH). Residues 792 to 943 (LLDKLLIRLR…HLVIQRMDTT (152 aa)) enclose the Helicase C-terminal domain. Residues serine 1025, serine 1040, serine 1081, serine 1085, serine 1096, serine 1098, serine 1100, and serine 1102 each carry the phosphoserine modification. The segment at 1080–1120 (ISFNGSEGRRSRSRRYSGSDSDSISEGKRPKKRGRPRTIPR) is disordered. Basic residues predominate over residues 1108 to 1117 (RPKKRGRPRT). A Phosphoserine modification is found at serine 1161. Disordered regions lie at residues 1321 to 1408 (EALS…ESEE) and 1502 to 1710 (KKRQ…SRKT). Residues 1329–1345 (SKRRKARAKKNKAMKSI) are compositionally biased toward basic residues. Residues serine 1353, serine 1355, serine 1356, serine 1360, serine 1363, serine 1371, and serine 1373 each carry the phosphoserine modification. Residues 1370-1379 (LSESKSDGRE) are compositionally biased toward basic and acidic residues. Positions 1409-1511 (LDQKTFSICK…KKRQESQQNS (103 aa)) are CHD1 helical C-terminal domain (CHCT). Residues 1507–1516 (SQQNSDQNSN) show a composition bias toward low complexity. Composition is skewed to basic and acidic residues over residues 1523–1573 (RNPD…DSRK) and 1582–1670 (GKDH…DHRA). Position 1622 is a phosphoserine (serine 1622). Tandem repeats lie at residues 1628–1632 (HSDHR), 1634–1638 (HSDHR), and 1640–1644 (HSDHR). Residues 1628 to 1644 (HSDHRSHSDHRLHSDHR) form a 3 X 5 AA repeats of H-S-D-H-R region. Serine 1677, arginine 1688, and serine 1689 each carry phosphoserine. Positions 1690–1701 (PFEHSVEHKSTP) are enriched in basic and acidic residues.

The protein belongs to the SNF2/RAD54 helicase family. Component of the SAGA complex. Interacts with BCLAF1, NCoR, SRP20 and SAFB. Specifically interacts with methylated H3K4me2 and H3K4me3. Interacts with the FACT complex, the PAF complex and the U2 snRNP. Interacts directly with PAF1, SFA3A1, SFA3A2, SFA3A3, SNF2 and SSRP1. As to expression, expressed in many tissues including in the brain, where the highest level of expression is found in the cerebellum and basal ganglia.

The protein localises to the nucleus. It localises to the cytoplasm. The catalysed reaction is ATP + H2O = ADP + phosphate + H(+). ATP-dependent chromatin-remodeling factor which functions as substrate recognition component of the transcription regulatory histone acetylation (HAT) complex SAGA. Regulates polymerase II transcription. Also required for efficient transcription by RNA polymerase I, and more specifically the polymerase I transcription termination step. Regulates negatively DNA replication. Not only involved in transcription-related chromatin-remodeling, but also required to maintain a specific chromatin configuration across the genome. Is also associated with histone deacetylase (HDAC) activity. Required for the bridging of SNF2, the FACT complex, the PAF complex as well as the U2 snRNP complex to H3K4me3. Functions to modulate the efficiency of pre-mRNA splicing in part through physical bridging of spliceosomal components to H3K4me3. Required for maintaining open chromatin and pluripotency in embryonic stem cells. This Homo sapiens (Human) protein is Chromodomain-helicase-DNA-binding protein 1.